Reading from the N-terminus, the 169-residue chain is Ribosome maturation factor RimM (169 aa).

The PRC barrel domain maps to 91-167; the sequence is EGEYYFADLI…RIVIATDFAH (77 aa).

This sequence belongs to the RimM family. As to quaternary structure, binds ribosomal protein uS19.

It is found in the cytoplasm. In terms of biological role, an accessory protein needed during the final step in the assembly of 30S ribosomal subunit, possibly for assembly of the head region. Essential for efficient processing of 16S rRNA. May be needed both before and after RbfA during the maturation of 16S rRNA. It has affinity for free ribosomal 30S subunits but not for 70S ribosomes. This chain is Ribosome maturation factor RimM, found in Erythrobacter litoralis (strain HTCC2594).